The sequence spans 327 residues: Malate dehydrogenase (327 aa).

Residue 12–18 participates in NAD(+) binding; that stretch reads GAAGQIA. Substrate-binding residues include Arg93 and Arg99. NAD(+) is bound by residues Asn106, Gln113, and 130–132; that span reads VGN. Substrate contacts are provided by Asn132 and Arg163. His188 serves as the catalytic Proton acceptor.

The protein belongs to the LDH/MDH superfamily. MDH type 2 family.

The catalysed reaction is (S)-malate + NAD(+) = oxaloacetate + NADH + H(+). Catalyzes the reversible oxidation of malate to oxaloacetate. This is Malate dehydrogenase from Burkholderia mallei (strain NCTC 10247).